A 207-amino-acid chain; its full sequence is Thiamine-phosphate synthase (207 aa).

4-amino-2-methyl-5-(diphosphooxymethyl)pyrimidine-binding positions include 36–40 (QLRMK) and N68. D69 and D88 together coordinate Mg(2+). 4-amino-2-methyl-5-(diphosphooxymethyl)pyrimidine is bound at residue S106. Position 132 to 134 (132 to 134 (TNT)) interacts with 2-[(2R,5Z)-2-carboxy-4-methylthiazol-5(2H)-ylidene]ethyl phosphate. Residue K135 coordinates 4-amino-2-methyl-5-(diphosphooxymethyl)pyrimidine. 2-[(2R,5Z)-2-carboxy-4-methylthiazol-5(2H)-ylidene]ethyl phosphate-binding positions include G162 and 182 to 183 (VS).

It belongs to the thiamine-phosphate synthase family. Mg(2+) is required as a cofactor.

It carries out the reaction 2-[(2R,5Z)-2-carboxy-4-methylthiazol-5(2H)-ylidene]ethyl phosphate + 4-amino-2-methyl-5-(diphosphooxymethyl)pyrimidine + 2 H(+) = thiamine phosphate + CO2 + diphosphate. The enzyme catalyses 2-(2-carboxy-4-methylthiazol-5-yl)ethyl phosphate + 4-amino-2-methyl-5-(diphosphooxymethyl)pyrimidine + 2 H(+) = thiamine phosphate + CO2 + diphosphate. It catalyses the reaction 4-methyl-5-(2-phosphooxyethyl)-thiazole + 4-amino-2-methyl-5-(diphosphooxymethyl)pyrimidine + H(+) = thiamine phosphate + diphosphate. Its pathway is cofactor biosynthesis; thiamine diphosphate biosynthesis; thiamine phosphate from 4-amino-2-methyl-5-diphosphomethylpyrimidine and 4-methyl-5-(2-phosphoethyl)-thiazole: step 1/1. Condenses 4-methyl-5-(beta-hydroxyethyl)thiazole monophosphate (THZ-P) and 2-methyl-4-amino-5-hydroxymethyl pyrimidine pyrophosphate (HMP-PP) to form thiamine monophosphate (TMP). The polypeptide is Thiamine-phosphate synthase (Methanococcus maripaludis (strain C6 / ATCC BAA-1332)).